The primary structure comprises 477 residues: Bifunctional protein HldE (477 aa).

The ribokinase stretch occupies residues 1–318 (MKVTLPEFER…ENAVRGRADT (318 aa)). Lys-179 carries the post-translational modification N6-acetyllysine. 195–198 (NLSE) lines the ATP pocket. Asp-264 is a catalytic residue. Residues 344–477 (MTNGVFDILH…IKKIQQDKKG (134 aa)) are cytidylyltransferase.

It in the N-terminal section; belongs to the carbohydrate kinase PfkB family. The protein in the C-terminal section; belongs to the cytidylyltransferase family. Homodimer.

The catalysed reaction is D-glycero-beta-D-manno-heptose 7-phosphate + ATP = D-glycero-beta-D-manno-heptose 1,7-bisphosphate + ADP + H(+). It catalyses the reaction D-glycero-beta-D-manno-heptose 1-phosphate + ATP + H(+) = ADP-D-glycero-beta-D-manno-heptose + diphosphate. The protein operates within nucleotide-sugar biosynthesis; ADP-L-glycero-beta-D-manno-heptose biosynthesis; ADP-L-glycero-beta-D-manno-heptose from D-glycero-beta-D-manno-heptose 7-phosphate: step 1/4. It functions in the pathway nucleotide-sugar biosynthesis; ADP-L-glycero-beta-D-manno-heptose biosynthesis; ADP-L-glycero-beta-D-manno-heptose from D-glycero-beta-D-manno-heptose 7-phosphate: step 3/4. In terms of biological role, catalyzes the phosphorylation of D-glycero-D-manno-heptose 7-phosphate at the C-1 position to selectively form D-glycero-beta-D-manno-heptose-1,7-bisphosphate. Its function is as follows. Catalyzes the ADP transfer from ATP to D-glycero-beta-D-manno-heptose 1-phosphate, yielding ADP-D-glycero-beta-D-manno-heptose. This chain is Bifunctional protein HldE, found in Shigella sonnei (strain Ss046).